The following is a 450-amino-acid chain: Tubulin alpha-3C chain (450 aa).

The MREC motif signature appears at 1–4 (MREC). GTP is bound at residue Q11. K40 bears the N6-acetyllysine mark. The GTP site is built by E71, S140, G144, T145, T179, N206, and N228. E71 contacts Mg(2+). Residue E254 is part of the active site. Y282 is modified (3'-nitrotyrosine). Residue S439 is modified to Phosphoserine. Y450 is subject to 3'-nitrotyrosine.

The protein belongs to the tubulin family. In terms of assembly, dimer of alpha and beta chains. A typical microtubule is a hollow water-filled tube with an outer diameter of 25 nm and an inner diameter of 15 nM. Alpha-beta heterodimers associate head-to-tail to form protofilaments running lengthwise along the microtubule wall with the beta-tubulin subunit facing the microtubule plus end conferring a structural polarity. Microtubules usually have 13 protofilaments but different protofilament numbers can be found in some organisms and specialized cells. Mg(2+) is required as a cofactor. Some glutamate residues at the C-terminus are polyglutamylated, resulting in polyglutamate chains on the gamma-carboxyl group. Polyglutamylation plays a key role in microtubule severing by spastin (SPAST). SPAST preferentially recognizes and acts on microtubules decorated with short polyglutamate tails: severing activity by SPAST increases as the number of glutamates per tubulin rises from one to eight, but decreases beyond this glutamylation threshold. Glutamylation is also involved in cilia motility. Post-translationally, some glutamate residues at the C-terminus are monoglycylated but not polyglycylated due to the absence of functional TTLL10 in human. Monoglycylation is mainly limited to tubulin incorporated into cilia and flagella axonemes, which is required for their stability and maintenance. Flagella glycylation controls sperm motility. Both polyglutamylation and monoglycylation can coexist on the same protein on adjacent residues, and lowering glycylation levels increases polyglutamylation, and reciprocally. In terms of processing, acetylation of alpha chains at Lys-40 is located inside the microtubule lumen. This modification has been correlated with increased microtubule stability, intracellular transport and ciliary assembly. Methylation of alpha chains at Lys-40 is found in mitotic microtubules and is required for normal mitosis and cytokinesis contributing to genomic stability. Post-translationally, nitration of Tyr-450 is irreversible and interferes with normal dynein intracellular distribution. In terms of processing, undergoes a tyrosination/detyrosination cycle, the cyclic removal and re-addition of a C-terminal tyrosine residue by the enzymes tubulin tyrosine carboxypeptidase (MATCAP1/KIAA0895L, VASH1 or VASH2) and tubulin tyrosine ligase (TTL), respectively. Tyrosination promotes microtubule interaction with CAP-Gly domain-containing proteins such as CLIP1, CLIP2 and DCTN1. Tyrosination regulates the initiation of dynein-dynactin motility via interaction with DCTN1, which brings the dynein-dynactin complex into contact with microtubules. In neurons, tyrosinated tubulins mediate the initiation of retrograde vesicle transport. Post-translationally, detyrosination is involved in metaphase plate congression by guiding chromosomes during mitosis: detyrosination promotes interaction with CENPE, promoting pole-proximal transport of chromosomes toward the equator. Detyrosination increases microtubules-dependent mechanotransduction in dystrophic cardiac and skeletal muscle. In cardiomyocytes, detyrosinated microtubules are required to resist to contractile compression during contraction: detyrosination promotes association with desmin (DES) at force-generating sarcomeres, leading to buckled microtubules and mechanical resistance to contraction. As to expression, expressed in testis.

It is found in the cytoplasm. The protein resides in the cytoskeleton. The catalysed reaction is GTP + H2O = GDP + phosphate + H(+). Its function is as follows. Tubulin is the major constituent of microtubules, a cylinder consisting of laterally associated linear protofilaments composed of alpha- and beta-tubulin heterodimers. Microtubules grow by the addition of GTP-tubulin dimers to the microtubule end, where a stabilizing cap forms. Below the cap, tubulin dimers are in GDP-bound state, owing to GTPase activity of alpha-tubulin. This Homo sapiens (Human) protein is Tubulin alpha-3C chain (TUBA3C).